The following is a 272-amino-acid chain: 2-amino-3,7-dideoxy-D-threo-hept-6-ulosonate synthase (272 aa).

The active-site Proton acceptor is the D33. 1-deoxy-D-threo-hexo-2,5-diulose 6-phosphate contacts are provided by residues 33–37 (DHGVS) and 153–155 (YPR). Catalysis depends on Y153, which acts as the Proton donor. K184 functions as the Schiff-base intermediate with substrate in the catalytic mechanism. 1-deoxy-D-threo-hexo-2,5-diulose 6-phosphate contacts are provided by residues 209–210 (GG) and 237–238 (GR).

The protein belongs to the DeoC/FbaB aldolase family. ADHS subfamily. In terms of assembly, homodecamer.

The catalysed reaction is 1-deoxy-D-threo-hexo-2,5-diulose 6-phosphate + L-aspartate 4-semialdehyde = 2,3-dioxopropyl phosphate + 2-amino-2,3,7-trideoxy-D-lyxo-hept-6-ulosonate. In terms of biological role, catalyzes a transaldol reaction between 6-deoxy-5-ketofructose 1-phosphate (DKFP) and L-aspartate semialdehyde (ASA) with an elimination of hydroxypyruvaldehyde phosphate to yield 2-amino-3,7-dideoxy-D-threo-hept-6-ulosonate (ADH). Plays a key role in an alternative pathway of the biosynthesis of 3-dehydroquinate (DHQ), which is involved in the canonical pathway for the biosynthesis of aromatic amino acids. The chain is 2-amino-3,7-dideoxy-D-threo-hept-6-ulosonate synthase from Methanococcus maripaludis (strain C7 / ATCC BAA-1331).